Reading from the N-terminus, the 1229-residue chain is Membrane-anchored lipid-binding protein SIP3 (1229 aa).

Over 1 to 1066 (MSVHGRDPKK…AEKFSRINRM (1066 aa)) the chain is Cytoplasmic. One can recognise a PH domain in the interval 309 to 423 (SPEKSGWLYM…WLIAFEATKK (115 aa)). The VASt domain occupies 771 to 976 (EYSITYNHEY…VLRYYLEKIG (206 aa)). The chain crosses the membrane as a helical span at residues 1067–1087 (MVVGLLASIMINILLSEKASV). Over 1088-1229 (PYWSIKRAEK…ELEKLRPPIT (142 aa)) the chain is Lumenal. Asparagine 1206 carries an N-linked (GlcNAc...) asparagine glycan.

The protein belongs to the SIP3 family. Interacts with SNF1.

Its subcellular location is the endoplasmic reticulum membrane. Its function is as follows. May be involved in sterol transfer between intracellular membranes. This chain is Membrane-anchored lipid-binding protein SIP3, found in Saccharomyces cerevisiae (strain ATCC 204508 / S288c) (Baker's yeast).